A 431-amino-acid chain; its full sequence is Nocturnin (431 aa).

Residues M1–Y75 constitute a mitochondrion transit peptide. Low complexity predominate over residues L20–P31. Residues L20–P41 form a disordered region. Residues L32 to P41 are compositionally biased toward pro residues. Residue E195 participates in Mg(2+) binding. Residues E195, K219–W221, N263, H286–A289, and D324–N326 contribute to the substrate site. Residues N343–A353 are interaction with PPARG. H414 contributes to the substrate binding site.

Belongs to the CCR4/nocturin family. In terms of assembly, interacts with PPARG. Mg(2+) is required as a cofactor. As to expression, adipose tissue. Expression is higher in subcutaneous adipose tissue as compared to visceral adipose tissue.

It localises to the cytoplasm. Its subcellular location is the nucleus. The protein localises to the perinuclear region. The protein resides in the mitochondrion. It carries out the reaction NADP(+) + H2O = phosphate + NAD(+). The enzyme catalyses NADPH + H2O = phosphate + NADH. In terms of biological role, phosphatase which catalyzes the conversion of NADP(+) to NAD(+) and of NADPH to NADH. Shows a small preference for NADPH over NADP(+). Represses translation and promotes degradation of target mRNA molecules. Plays an important role in post-transcriptional regulation of metabolic genes under circadian control. Exerts a rhythmic post-transcriptional control of genes necessary for metabolic functions including nutrient absorption, glucose/insulin sensitivity, lipid metabolism, adipogenesis, inflammation and osteogenesis. Plays an important role in favoring adipogenesis over osteoblastogenesis and acts as a key regulator of the adipogenesis/osteogenesis balance. Promotes adipogenesis by facilitating PPARG nuclear translocation which activates its transcriptional activity. Regulates circadian expression of NOS2 in the liver and negatively regulates the circadian expression of IGF1 in the bone. Critical for proper development of early embryos. This Homo sapiens (Human) protein is Nocturnin.